Here is a 514-residue protein sequence, read N- to C-terminus: 2,3-bisphosphoglycerate-independent phosphoglycerate mutase (514 aa).

The Mn(2+) site is built by D13 and S63. S63 serves as the catalytic Phosphoserine intermediate. Substrate contacts are provided by residues H124, 154 to 155, R186, R192, 258 to 261, and K332; these read RD and RADR. Mn(2+)-binding residues include D399, H403, D440, H441, and H459.

The protein belongs to the BPG-independent phosphoglycerate mutase family. Monomer. Mn(2+) serves as cofactor.

It catalyses the reaction (2R)-2-phosphoglycerate = (2R)-3-phosphoglycerate. Its pathway is carbohydrate degradation; glycolysis; pyruvate from D-glyceraldehyde 3-phosphate: step 3/5. Catalyzes the interconversion of 2-phosphoglycerate and 3-phosphoglycerate. In Legionella pneumophila subsp. pneumophila (strain Philadelphia 1 / ATCC 33152 / DSM 7513), this protein is 2,3-bisphosphoglycerate-independent phosphoglycerate mutase.